The primary structure comprises 324 residues: 4-hydroxy-3-methylbut-2-enyl diphosphate reductase (324 aa).

Position 13 (cysteine 13) interacts with [4Fe-4S] cluster. (2E)-4-hydroxy-3-methylbut-2-enyl diphosphate is bound by residues histidine 41 and histidine 75. 2 residues coordinate dimethylallyl diphosphate: histidine 41 and histidine 75. The isopentenyl diphosphate site is built by histidine 41 and histidine 75. Residue cysteine 97 coordinates [4Fe-4S] cluster. Residue histidine 125 coordinates (2E)-4-hydroxy-3-methylbut-2-enyl diphosphate. Histidine 125 contributes to the dimethylallyl diphosphate binding site. Histidine 125 is a binding site for isopentenyl diphosphate. The Proton donor role is filled by glutamate 127. Threonine 168 is a (2E)-4-hydroxy-3-methylbut-2-enyl diphosphate binding site. Cysteine 225 is a binding site for [4Fe-4S] cluster. Positions 253, 254, 255, and 302 each coordinate (2E)-4-hydroxy-3-methylbut-2-enyl diphosphate. Residues serine 253, serine 254, asparagine 255, and serine 302 each contribute to the dimethylallyl diphosphate site. The isopentenyl diphosphate site is built by serine 253, serine 254, asparagine 255, and serine 302.

The protein belongs to the IspH family. It depends on [4Fe-4S] cluster as a cofactor.

It catalyses the reaction isopentenyl diphosphate + 2 oxidized [2Fe-2S]-[ferredoxin] + H2O = (2E)-4-hydroxy-3-methylbut-2-enyl diphosphate + 2 reduced [2Fe-2S]-[ferredoxin] + 2 H(+). It carries out the reaction dimethylallyl diphosphate + 2 oxidized [2Fe-2S]-[ferredoxin] + H2O = (2E)-4-hydroxy-3-methylbut-2-enyl diphosphate + 2 reduced [2Fe-2S]-[ferredoxin] + 2 H(+). It functions in the pathway isoprenoid biosynthesis; dimethylallyl diphosphate biosynthesis; dimethylallyl diphosphate from (2E)-4-hydroxy-3-methylbutenyl diphosphate: step 1/1. Its pathway is isoprenoid biosynthesis; isopentenyl diphosphate biosynthesis via DXP pathway; isopentenyl diphosphate from 1-deoxy-D-xylulose 5-phosphate: step 6/6. Its function is as follows. Catalyzes the conversion of 1-hydroxy-2-methyl-2-(E)-butenyl 4-diphosphate (HMBPP) into a mixture of isopentenyl diphosphate (IPP) and dimethylallyl diphosphate (DMAPP). Acts in the terminal step of the DOXP/MEP pathway for isoprenoid precursor biosynthesis. The polypeptide is 4-hydroxy-3-methylbut-2-enyl diphosphate reductase (Chlorobium limicola (strain DSM 245 / NBRC 103803 / 6330)).